Here is a 131-residue protein sequence, read N- to C-terminus: Phosphoribosyl-AMP cyclohydrolase (131 aa).

A Mg(2+)-binding site is contributed by Asp-78. Cys-79 contributes to the Zn(2+) binding site. Mg(2+) is bound by residues Asp-80 and Asp-82. Zn(2+)-binding residues include Cys-96 and Cys-103.

The protein belongs to the PRA-CH family. Homodimer. Mg(2+) is required as a cofactor. The cofactor is Zn(2+).

It is found in the cytoplasm. The catalysed reaction is 1-(5-phospho-beta-D-ribosyl)-5'-AMP + H2O = 1-(5-phospho-beta-D-ribosyl)-5-[(5-phospho-beta-D-ribosylamino)methylideneamino]imidazole-4-carboxamide. It participates in amino-acid biosynthesis; L-histidine biosynthesis; L-histidine from 5-phospho-alpha-D-ribose 1-diphosphate: step 3/9. In terms of biological role, catalyzes the hydrolysis of the adenine ring of phosphoribosyl-AMP. The protein is Phosphoribosyl-AMP cyclohydrolase of Neisseria meningitidis serogroup C / serotype 2a (strain ATCC 700532 / DSM 15464 / FAM18).